Consider the following 324-residue polypeptide: Malate dehydrogenase (324 aa).

Residues 7-13 (GAAGGIG) and D34 contribute to the NAD(+) site. Residues R88 and R94 each contribute to the substrate site. NAD(+) is bound by residues N101 and 124 to 126 (VTN). Substrate contacts are provided by N126 and R160. H184 acts as the Proton acceptor in catalysis. M238 serves as a coordination point for NAD(+).

It belongs to the LDH/MDH superfamily. MDH type 1 family. As to quaternary structure, homodimer.

The enzyme catalyses (S)-malate + NAD(+) = oxaloacetate + NADH + H(+). Catalyzes the reversible oxidation of malate to oxaloacetate. The protein is Malate dehydrogenase of Haemophilus ducreyi (strain 35000HP / ATCC 700724).